The sequence spans 230 residues: MDQAKQDELKKAAAKKAAALVEDGMVLGVGTGSTVKFFIDELGKKKAAGLTLKAVVTTSSRSQKQLEGYGFTVSPLSEVDQVDLTVDGADRVDKQLNGIKGGGAALTLEKNVAVNSKKNVWIVDESKVVDHLSGFALPVEVLPISCMQVEKRLADEGLKPEFRLTEDGQRLKTHYGNYILDLKLDRIPVPSGLADYLDHTVGVVEHGLFLNICDQVIIARDNGEIEVRSR.

Residues 31–34 (TGST), 87–90 (DGAD), and 100–103 (KGGG) each bind substrate. The active-site Proton acceptor is glutamate 109. Lysine 127 is a substrate binding site.

The protein belongs to the ribose 5-phosphate isomerase family. In terms of assembly, homodimer.

The enzyme catalyses aldehydo-D-ribose 5-phosphate = D-ribulose 5-phosphate. It participates in carbohydrate degradation; pentose phosphate pathway; D-ribose 5-phosphate from D-ribulose 5-phosphate (non-oxidative stage): step 1/1. In terms of biological role, catalyzes the reversible conversion of ribose-5-phosphate to ribulose 5-phosphate. The protein is Ribose-5-phosphate isomerase A of Lactobacillus delbrueckii subsp. bulgaricus (strain ATCC 11842 / DSM 20081 / BCRC 10696 / JCM 1002 / NBRC 13953 / NCIMB 11778 / NCTC 12712 / WDCM 00102 / Lb 14).